A 190-amino-acid chain; its full sequence is Small ribosomal subunit protein uS5 (190 aa).

An S5 DRBM domain is found at 22–85 (FVDKLVHINR…DSAKRNLTRV (64 aa)).

This sequence belongs to the universal ribosomal protein uS5 family. As to quaternary structure, part of the 30S ribosomal subunit. Contacts proteins S4 and S8.

With S4 and S12 plays an important role in translational accuracy. Its function is as follows. Located at the back of the 30S subunit body where it stabilizes the conformation of the head with respect to the body. The sequence is that of Small ribosomal subunit protein uS5 from Bradyrhizobium sp. (strain BTAi1 / ATCC BAA-1182).